The following is a 395-amino-acid chain: Protochlorophyllide reductase B, chloroplastic (395 aa).

The N-terminal 59 residues, 1–59 (MALQAATSFLPSALSARKEGAAKDSAFFGVRLADGLKLDATSLGLRTKRVNTSSVAIRA), are a transit peptide targeting the chloroplast.

The protein belongs to the short-chain dehydrogenases/reductases (SDR) family. POR subfamily.

The protein resides in the plastid. It localises to the chloroplast. The enzyme catalyses chlorophyllide a + NADP(+) = protochlorophyllide a + NADPH + H(+). Its pathway is porphyrin-containing compound metabolism; chlorophyll biosynthesis. Phototransformation of protochlorophyllide (Pchlide) to chlorophyllide (Chlide). This Hordeum vulgare (Barley) protein is Protochlorophyllide reductase B, chloroplastic (PORB).